A 529-amino-acid chain; its full sequence is MTSETVIAPSLSTAQNDGTFTYDKVKSTAKERKHLNLKNPSDANEIKSKIWNYYSLSELIQYLGQKENDDFKYKRITLQFPDNLICDSATIVHELQRELNIVPQANQDTGESNTAQRVWILADTSYSACCVDEVAAEHVRSDLVVHFGDACLNEIDKLQAVFVLGKPTLDVDAIVKQIKTAYSTEQKVVLMSDAPHTYLLPEIAKQLPDYDILIADLPKTSRAKIIGYTPPPTGHKKFNRVFNTDTVEFGKYELFHITSPESPRLLQLTTNFASVTTYDPISGTVSTGPFPNLMRRYKYVHQARMAGTVGILVNTLSLANTKVLLNTIKEKIKEAGKKHYIFVVGKPNVAKLANFESVDIWCILGCDHQGIIIDQINEYYKPIVTPYELLLGLSDELSWTGKWVVDYKSVLEEYGNEVIQQNEDPDTDEDLPPVFDPVTGRYVSTSKPLRQINHLMVTSSEQGGVDDHDNQLVKRFSNAVAIKGTVSTSAIHLQNRHWTGLGSDYTEDENAAGALVEDGRKGIARGYDI.

Cys130, Cys151, and Cys366 together coordinate [4Fe-4S] cluster.

Belongs to the DPH1/DPH2 family. DPH2 subfamily. In terms of assembly, component of the 2-(3-amino-3-carboxypropyl)histidine synthase complex composed of DPH1, DPH2, DPH3 and a NADH-dependent reductase, predominantly CBR1. [4Fe-4S] cluster is required as a cofactor.

The protein localises to the cytoplasm. The protein operates within protein modification; peptidyl-diphthamide biosynthesis. Its function is as follows. Required for the first step of diphthamide biosynthesis, a post-translational modification of histidine which occurs in elongation factor 2. DPH1 and DPH2 transfer a 3-amino-3-carboxypropyl (ACP) group from S-adenosyl-L-methionine (SAM) to a histidine residue, the reaction is assisted by a reduction system comprising DPH3 and a NADH-dependent reductase, predominantly CBR1. Facilitates the reduction of the catalytic iron-sulfur cluster found in the DPH1 subunit. In Candida albicans (strain SC5314 / ATCC MYA-2876) (Yeast), this protein is 2-(3-amino-3-carboxypropyl)histidine synthase subunit 2-2.